Consider the following 106-residue polypeptide: MGKNNDWLNFEHLVKDKQIEALQPPSMYKVILNNDDYTPMEFVIDVLQKFFSYDIERATQLMLNVHYQGKAICGVFTAEVAETKVAHVNQYARENEHPLLCTLEKA.

The protein belongs to the ClpS family. In terms of assembly, binds to the N-terminal domain of the chaperone ClpA.

In terms of biological role, involved in the modulation of the specificity of the ClpAP-mediated ATP-dependent protein degradation. This is ATP-dependent Clp protease adapter protein ClpS from Yersinia pestis bv. Antiqua (strain Antiqua).